A 797-amino-acid polypeptide reads, in one-letter code: Probable exo-1,4-beta-xylosidase bxlB (797 aa).

The signal sequence occupies residues 1–21; sequence MPLICIVYFLQYLDKIAISYA. Asn-86 and Asn-126 each carry an N-linked (GlcNAc...) asparagine glycan. Asp-312 is an active-site residue. N-linked (GlcNAc...) asparagine glycosylation is found at Asn-364, Asn-431, Asn-442, Asn-483, Asn-644, and Asn-787.

It belongs to the glycosyl hydrolase 3 family.

The protein resides in the secreted. The enzyme catalyses Hydrolysis of (1-&gt;4)-beta-D-xylans, to remove successive D-xylose residues from the non-reducing termini.. The protein operates within glycan degradation; xylan degradation. Its function is as follows. Xylan 1,4-beta-xylosidase involved in the hydrolysis of xylan, a major structural heterogeneous polysaccharide found in plant biomass representing the second most abundant polysaccharide in the biosphere, after cellulose. The chain is Probable exo-1,4-beta-xylosidase bxlB (bxlB) from Aspergillus oryzae (strain ATCC 42149 / RIB 40) (Yellow koji mold).